The sequence spans 354 residues: Isopentenyl-diphosphate delta-isomerase (354 aa).

Position 11–12 (11–12 (KK)) interacts with substrate. Residues serine 67, 68–70 (SMT), serine 98, and asparagine 126 contribute to the FMN site. 98–100 (SFK) provides a ligand contact to substrate. Substrate is bound at residue glutamine 160. Glutamate 161 provides a ligand contact to Mg(2+). FMN is bound by residues lysine 192, threonine 222, and 289–290 (AA).

Belongs to the IPP isomerase type 2 family. Homooctamer. Dimer of tetramers. The cofactor is FMN. It depends on NADPH as a cofactor. Mg(2+) serves as cofactor.

It localises to the cytoplasm. The catalysed reaction is isopentenyl diphosphate = dimethylallyl diphosphate. Its function is as follows. Involved in the biosynthesis of isoprenoids. Catalyzes the 1,3-allylic rearrangement of the homoallylic substrate isopentenyl (IPP) to its allylic isomer, dimethylallyl diphosphate (DMAPP). The sequence is that of Isopentenyl-diphosphate delta-isomerase from Borrelia garinii subsp. bavariensis (strain ATCC BAA-2496 / DSM 23469 / PBi) (Borreliella bavariensis).